A 512-amino-acid chain; its full sequence is Mesoderm induction early response protein 1 (512 aa).

Residues 1-16 (MAEPSVESSSPGGSAT) show a composition bias toward low complexity. Disordered regions lie at residues 1–63 (MAEP…REGD) and 75–173 (YGST…EDYI). Serine 10 bears the Phosphoserine mark. Residues 17-36 (SDDHEFDPSADMLVHDFDDE) are compositionally biased toward basic and acidic residues. 2 stretches are compositionally biased toward acidic residues: residues 37-46 (RTLEEEEMME) and 83-105 (EEDE…DNDD). Polar residues predominate over residues 129–144 (QSSNDDPSQSVASQDA). Residue serine 141 is modified to Phosphoserine. The residue at position 155 (tyrosine 155) is a Phosphotyrosine. 2 positions are modified to phosphoserine: serine 160 and serine 166. Residues 160–173 (SEVEEESEEDEDYI) are compositionally biased toward acidic residues. The region spanning 180 to 278 (KEIMVGSMFQ…EALRRLRFNV (99 aa)) is the ELM2 domain. The interaction with HDAC1 stretch occupies residues 180–284 (KEIMVGSMFQ…RFNVKAAREE (105 aa)). Lysine 239 participates in a covalent cross-link: Glycyl lysine isopeptide (Lys-Gly) (interchain with G-Cter in SUMO2). In terms of domain architecture, SANT spans 283–335 (EELSVWTEEECRNFEQGLKAYGKDFHLIQANKVRTRSVGECVAFYYMWKKSER). Positions 366–512 (ESESAASSRA…KFEELENTDD (147 aa)) are disordered. 3 positions are modified to phosphoserine: serine 367, serine 369, and serine 377. A compositionally biased stretch (polar residues) spans 396 to 409 (TVSTANQNGVSSNG). Residues 414–423 (LNKEEVKVEG) show a composition bias toward basic and acidic residues. A Glycyl lysine isopeptide (Lys-Gly) (interchain with G-Cter in SUMO2) cross-link involves residue lysine 420. At threonine 448 the chain carries Phosphothreonine. Residues 462-475 (ARNENDFDEKSERP) are compositionally biased toward basic and acidic residues. Positions 482–494 (NSNGKESPGSSEF) are enriched in polar residues. Residues serine 483, serine 488, and serine 491 each carry the phosphoserine modification.

In terms of assembly, interacts with HDAC1. Part of a complex containing at least CDYL, MIER1, MIER2, HDAC1 and HDAC2. In terms of tissue distribution, ubiquitously expressed, but at very low levels. However, consistent level of expression are observed in heart, testis, thyroid, ovary and adrenal gland. Transcripts are up-regulated in breast carcinoma cell lines and tumor.

The protein resides in the nucleus. Its subcellular location is the cytoplasm. Functionally, transcriptional repressor regulating the expression of a number of genes including SP1 target genes. Probably functions through recruitment of HDAC1 a histone deacetylase involved in chromatin silencing. The polypeptide is Mesoderm induction early response protein 1 (MIER1) (Homo sapiens (Human)).